The following is a 328-amino-acid chain: Cell division protein ZipA (328 aa).

Over 1-6 (MMQDLR) the chain is Periplasmic. Residues 7-27 (LILIVVGAIAIIALLLHGLWT) traverse the membrane as a helical segment. The Cytoplasmic portion of the chain corresponds to 28 to 328 (SRKERSSLFR…REVLDANTIA (301 aa)). Positions 61–72 (GEVRVRTSHPQE) are enriched in basic and acidic residues. Residues 61-183 (GEVRVRTSHP…EPVAPAPEAK (123 aa)) form a disordered region. Composition is skewed to polar residues over residues 95-104 (KSAQVKTASR) and 164-174 (APQQHVESQQE).

Belongs to the ZipA family. As to quaternary structure, interacts with FtsZ via their C-terminal domains.

The protein resides in the cell inner membrane. Functionally, essential cell division protein that stabilizes the FtsZ protofilaments by cross-linking them and that serves as a cytoplasmic membrane anchor for the Z ring. Also required for the recruitment to the septal ring of downstream cell division proteins. In Yersinia pestis bv. Antiqua (strain Antiqua), this protein is Cell division protein ZipA.